The sequence spans 229 residues: Enolase-phosphatase E1 (229 aa).

Belongs to the HAD-like hydrolase superfamily. MasA/MtnC family. In terms of assembly, monomer. It depends on Mg(2+) as a cofactor.

It carries out the reaction 5-methylsulfanyl-2,3-dioxopentyl phosphate + H2O = 1,2-dihydroxy-5-(methylsulfanyl)pent-1-en-3-one + phosphate. It participates in amino-acid biosynthesis; L-methionine biosynthesis via salvage pathway; L-methionine from S-methyl-5-thio-alpha-D-ribose 1-phosphate: step 3/6. It functions in the pathway amino-acid biosynthesis; L-methionine biosynthesis via salvage pathway; L-methionine from S-methyl-5-thio-alpha-D-ribose 1-phosphate: step 4/6. Functionally, bifunctional enzyme that catalyzes the enolization of 2,3-diketo-5-methylthiopentyl-1-phosphate (DK-MTP-1-P) into the intermediate 2-hydroxy-3-keto-5-methylthiopentenyl-1-phosphate (HK-MTPenyl-1-P), which is then dephosphorylated to form the acireductone 1,2-dihydroxy-3-keto-5-methylthiopentene (DHK-MTPene). The sequence is that of Enolase-phosphatase E1 from Yersinia pestis (strain Pestoides F).